Here is a 98-residue protein sequence, read N- to C-terminus: Small ribosomal subunit protein bS6 (98 aa).

Belongs to the bacterial ribosomal protein bS6 family.

Binds together with bS18 to 16S ribosomal RNA. In Levilactobacillus brevis (strain ATCC 367 / BCRC 12310 / CIP 105137 / JCM 1170 / LMG 11437 / NCIMB 947 / NCTC 947) (Lactobacillus brevis), this protein is Small ribosomal subunit protein bS6.